A 548-amino-acid polypeptide reads, in one-letter code: Chaperonin GroEL (548 aa).

ATP-binding positions include 30-33, lysine 51, 87-91, glycine 415, 479-481, and aspartate 495; these read TLGP, DGTTT, and NAA.

It belongs to the chaperonin (HSP60) family. In terms of assembly, forms a cylinder of 14 subunits composed of two heptameric rings stacked back-to-back. Interacts with the co-chaperonin GroES.

The protein resides in the cytoplasm. It catalyses the reaction ATP + H2O + a folded polypeptide = ADP + phosphate + an unfolded polypeptide.. In terms of biological role, together with its co-chaperonin GroES, plays an essential role in assisting protein folding. The GroEL-GroES system forms a nano-cage that allows encapsulation of the non-native substrate proteins and provides a physical environment optimized to promote and accelerate protein folding. This chain is Chaperonin GroEL, found in Vibrio campbellii (strain ATCC BAA-1116).